We begin with the raw amino-acid sequence, 261 residues long: Pyridoxine-5'-phosphate oxidase (261 aa).

42–45 provides a ligand contact to pyridoxal 5'-phosphate; sequence RGDR. Residue 95–98 coordinates FMN; the sequence is RMLL. A pyridoxal 5'-phosphate-binding site is contributed by Lys100. Residues 110–111, 116–117, and Gln139 each bind FMN; these read FT and RK. Residues Tyr157, Arg161, and Ser165 each contribute to the pyridoxal 5'-phosphate site. Residues 174–175 and Trp219 contribute to the FMN site; that span reads QS. Residue 225–227 participates in pyridoxal 5'-phosphate binding; it reads RLH. Arg229 contributes to the FMN binding site. Position 238 is a phosphothreonine (Thr238). At Ser241 the chain carries Phosphoserine.

Belongs to the pyridoxamine 5'-phosphate oxidase family. As to quaternary structure, homodimer. It depends on FMN as a cofactor. As to expression, ubiquitous. Expressed in liver, brain, lung, prostate and stomach (at protein level).

It catalyses the reaction pyridoxine 5'-phosphate + O2 = pyridoxal 5'-phosphate + H2O2. The enzyme catalyses pyridoxamine 5'-phosphate + O2 + H2O = pyridoxal 5'-phosphate + H2O2 + NH4(+). Its pathway is cofactor metabolism; pyridoxal 5'-phosphate salvage; pyridoxal 5'-phosphate from pyridoxamine 5'-phosphate: step 1/1. It functions in the pathway cofactor metabolism; pyridoxal 5'-phosphate salvage; pyridoxal 5'-phosphate from pyridoxine 5'-phosphate: step 1/1. In terms of biological role, catalyzes the oxidation of either pyridoxine 5'-phosphate (PNP) or pyridoxamine 5'-phosphate (PMP) into pyridoxal 5'-phosphate (PLP). In Homo sapiens (Human), this protein is Pyridoxine-5'-phosphate oxidase (PNPO).